Consider the following 325-residue polypeptide: Inner membrane protein YrbG (325 aa).

Over 1 to 5 (MLLAT) the chain is Periplasmic. The helical transmembrane segment at 6 to 26 (ALLIVGLLLVVYSADRLVFAA) threads the bilayer. Residues 27–37 (SILCRTFGIPP) are Cytoplasmic-facing. Residues 38–58 (LIIGMTVVSIGTSLPEVIVSL) traverse the membrane as a helical segment. The Periplasmic portion of the chain corresponds to 59 to 67 (AASLHEQRD). The chain crosses the membrane as a helical span at residues 68-88 (LAVGTALGSNIINILLILGLA). The Cytoplasmic segment spans residues 89–104 (ALVRPFTVHSDVLRRE). A helical membrane pass occupies residues 105 to 125 (LPLMLLVSVVAGSVLYDGQLS). Position 126 (Arg-126) is a topological domain, periplasmic. Residues 127–147 (SDGIFLLFLAVLWLLFIVKLA) traverse the membrane as a helical segment. The Cytoplasmic portion of the chain corresponds to 148–169 (RQAERQGTDSLTREQLAELPRD). Residues 170-190 (GGLPVAFLWLGIALIIMPVAT) traverse the membrane as a helical segment. At 191 to 198 (RMVVDNAT) the chain is on the periplasmic side. The chain crosses the membrane as a helical span at residues 199–219 (VLANYFAISELTMGLTAIAIG). At 220-243 (TSLPELATAIAGVRKGENDIAVGN) the chain is on the cytoplasmic side. Residues 244–264 (IIGANIFNIVIVLGLPALITP) form a helical membrane-spanning segment. Residues 265–269 (GEIDP) lie on the Periplasmic side of the membrane. The helical transmembrane segment at 270 to 290 (LAYSRDYSVMLLVSIIFALLC) threads the bilayer. The Cytoplasmic segment spans residues 291–302 (WRRSPQPGRGVG). Residues 303 to 323 (VLLTGGFIVWLAMLYWLSPIL) form a helical membrane-spanning segment. Over 324-325 (VE) the chain is Periplasmic.

This sequence belongs to the Ca(2+):cation antiporter (CaCA) (TC 2.A.19) family.

The protein resides in the cell inner membrane. This Escherichia coli (strain K12) protein is Inner membrane protein YrbG (yrbG).